Here is an 86-residue protein sequence, read N- to C-terminus: Toxin ICK-18 (86 aa).

The first 19 residues, 1–19 (MKTIFALVFCCAIAVVVLG), serve as a signal peptide directing secretion. 4 cysteine pairs are disulfide-bonded: Cys35–Cys49, Cys42–Cys61, Cys48–Cys76, and Cys79–Cys86.

This sequence belongs to the neurotoxin 21 family. As to expression, expressed by the venom gland.

Its subcellular location is the secreted. Functionally, probable neurotoxin with ion channel impairing activity. The sequence is that of Toxin ICK-18 from Trittame loki (Brush-footed trapdoor spider).